A 304-amino-acid chain; its full sequence is Protoheme IX farnesyltransferase 1 (304 aa).

The next 8 helical transmembrane spans lie at V24–L44, F47–A67, M99–T119, L122–L142, I150–G170, P176–I196, L228–L248, and Y280–L300.

It belongs to the UbiA prenyltransferase family. Protoheme IX farnesyltransferase subfamily.

It localises to the cell inner membrane. It carries out the reaction heme b + (2E,6E)-farnesyl diphosphate + H2O = Fe(II)-heme o + diphosphate. It participates in porphyrin-containing compound metabolism; heme O biosynthesis; heme O from protoheme: step 1/1. Its function is as follows. Converts heme B (protoheme IX) to heme O by substitution of the vinyl group on carbon 2 of heme B porphyrin ring with a hydroxyethyl farnesyl side group. This is Protoheme IX farnesyltransferase 1 from Pseudomonas aeruginosa (strain UCBPP-PA14).